The sequence spans 205 residues: Protein-L-isoaspartate O-methyltransferase (205 aa).

Residue Ser-52 is part of the active site.

Belongs to the methyltransferase superfamily. L-isoaspartyl/D-aspartyl protein methyltransferase family.

The protein resides in the cytoplasm. It carries out the reaction [protein]-L-isoaspartate + S-adenosyl-L-methionine = [protein]-L-isoaspartate alpha-methyl ester + S-adenosyl-L-homocysteine. Functionally, catalyzes the methyl esterification of L-isoaspartyl residues in peptides and proteins that result from spontaneous decomposition of normal L-aspartyl and L-asparaginyl residues. It plays a role in the repair and/or degradation of damaged proteins. This Gloeobacter violaceus (strain ATCC 29082 / PCC 7421) protein is Protein-L-isoaspartate O-methyltransferase.